Consider the following 243-residue polypeptide: Adenosylcobinamide-GDP ribazoletransferase (243 aa).

5 helical membrane-spanning segments follow: residues Leu31–Leu51, Ala55–Leu75, Ile109–Ile129, Ile135–Thr155, and Val188–Trp208.

The protein belongs to the CobS family. It depends on Mg(2+) as a cofactor.

It is found in the cell inner membrane. It catalyses the reaction alpha-ribazole + adenosylcob(III)inamide-GDP = adenosylcob(III)alamin + GMP + H(+). It carries out the reaction alpha-ribazole 5'-phosphate + adenosylcob(III)inamide-GDP = adenosylcob(III)alamin 5'-phosphate + GMP + H(+). Its pathway is cofactor biosynthesis; adenosylcobalamin biosynthesis; adenosylcobalamin from cob(II)yrinate a,c-diamide: step 7/7. In terms of biological role, joins adenosylcobinamide-GDP and alpha-ribazole to generate adenosylcobalamin (Ado-cobalamin). Also synthesizes adenosylcobalamin 5'-phosphate from adenosylcobinamide-GDP and alpha-ribazole 5'-phosphate. In Pseudomonas syringae pv. tomato (strain ATCC BAA-871 / DC3000), this protein is Adenosylcobinamide-GDP ribazoletransferase.